Reading from the N-terminus, the 52-residue chain is Protein YabQ (52 aa).

Its function is as follows. Identified as a multicopy suppressor of the slow growth phenotype of an rsgA (yjeQ) deletion mutant. This chain is Protein YabQ (yabQ), found in Escherichia coli (strain K12).